Consider the following 2224-residue polypeptide: Coagulation factor V (2224 aa).

The first 28 residues, 1–28 (MFPGCPRLWVLVVLGTSWVGWGSQGTEA), serve as a signal peptide directing secretion. 4 Plastocyanin-like domains span residues 30 to 193 (QLRQ…LLIC), 203 to 329 (TQKT…IKNC), 348 to 526 (KRWE…LLIC), and 536 to 684 (IQRA…DVKC). F5/8 type A domains are found at residues 30 to 329 (QLRQ…IKNC) and 348 to 684 (KRWE…DVKC). N-linked (GlcNAc...) asparagine glycans are attached at residues Asn-51 and Asn-55. The Ca(2+) site is built by Asp-139 and Asp-140. Cys-167 and Cys-193 form a disulfide bridge. 5 N-linked (GlcNAc...) asparagine glycosylation sites follow: Asn-239, Asn-297, Asn-382, Asn-460, and Asn-468. A disulfide bond links Cys-248 and Cys-329. A disulfide bridge connects residues Cys-500 and Cys-526. Residue Asn-554 is glycosylated (N-linked (GlcNAc...) asparagine). Cys-603 and Cys-684 form a disulfide bridge. Thr-640 is modified (phosphothreonine). Residues 692–1573 (SYEIFEPPES…PDNIAAWYLR (882 aa)) are b. A sulfotyrosine mark is found at Tyr-693, Tyr-724, and Tyr-726. A propeptide spans 738–1573 (SFRNSSLNQE…PDNIAAWYLR (836 aa)) (activation peptide (connecting region)). N-linked (GlcNAc...) asparagine glycosylation is found at Asn-741, Asn-752, Asn-760, Asn-776, and Asn-782. A glycan (O-linked (GalNAc...) threonine) is linked at Thr-805. Asn-821 is a glycosylation site (N-linked (GlcNAc...) asparagine). The span at 822-831 (SSTAEHSSPY) shows a compositional bias: polar residues. The interval 822–842 (SSTAEHSSPYSEDPIEDPLQP) is disordered. Ser-859 bears the Phosphoserine; by FAM20C mark. Residues 894–927 (LSQDTGSPSGMRPWEDLPSQDTGSPSRMRPWKDP) are disordered. A run of 2 repeats spans residues 895 to 911 (SQDT…EDLP) and 912 to 928 (SQDT…KDPP). The segment at 895–928 (SQDTGSPSGMRPWEDLPSQDTGSPSRMRPWKDPP) is 2 X 17 AA tandem repeats. 2 N-linked (GlcNAc...) asparagine glycosylation sites follow: Asn-938 and Asn-977. Disordered stretches follow at residues 982–1001 (WGES…HPKF) and 1029–1048 (TRKK…PRTF). The segment covering 1029–1040 (TRKKKKEKHTHH) has biased composition (basic residues). N-linked (GlcNAc...) asparagine glycosylation is found at Asn-1074, Asn-1083, Asn-1103, and Asn-1106. The segment at 1097-1157 (LPDHNQNSSN…SSSPELSEML (61 aa)) is disordered. Polar residues predominate over residues 1099–1111 (DHNQNSSNDTGQA). Residues 1139 to 1154 (HSTSDPSHRSSSPELS) show a composition bias toward low complexity. 35 consecutive repeat copies span residues 1185–1193 (VISPDLSQV), 1194–1202 (TLSPELSQT), 1203–1211 (NLSPDLSHT), 1212–1220 (TLSPELIQR), 1221–1229 (NLSPALGQM), 1230–1238 (PISPDLSHT), 1239–1247 (TLSPDLSHT), 1248–1256 (TLSLDLSQT), 1257–1265 (NLSPELSQT), 1266–1274 (NLSPALGQM), 1275–1283 (PLSPDLSHT), 1284–1292 (TLSLDFSQT), 1293–1301 (NLSPELSHM), 1302–1310 (TLSPELSQT), 1311–1319 (NLSPALGQM), 1320–1328 (PISPDLSHT), 1329–1337 (TLSLDFSQT), 1338–1346 (NLSPELSQT), 1347–1355 (NLSPALGQM), 1356–1364 (PLSPDPSHT), 1365–1373 (TLSLDLSQT), 1374–1382 (NLSPELSQT), 1383–1391 (NLSPDLSEM), 1392–1400 (PLFADLSQI), 1401–1409 (PLTPDLDQM), 1410–1418 (TLSPDLGET), 1419–1427 (DLSPNFGQM), 1428–1436 (SLSPDLSQV), 1437–1445 (TLSPDISDT), 1446–1454 (TLLPDLSQI), 1455–1463 (SPPPDLDQI), 1464–1472 (FYPSESSQS), 1473–1481 (LLLQEFNES), 1482–1490 (FPYPDLGQM), and 1493–1501 (PSSPTLNDT). Positions 1185 to 1501 (VISPDLSQVT…SPSSPTLNDT (317 aa)) are 35 X 9 AA approximate tandem repeats of [TNP]-L-S-P-D-L-S-Q-T. Residues 1341–1367 (PELSQTNLSPALGQMPLSPDPSHTTLS) are disordered. Asn-1479 carries an N-linked (GlcNAc...) asparagine glycan. N-linked (GlcNAc...) asparagine glycosylation occurs at Asn-1499. Sulfotyrosine occurs at positions 1522, 1538, and 1543. Residue Asn-1559 is glycosylated (N-linked (GlcNAc...) asparagine). 2 Plastocyanin-like domains span residues 1578–1751 (NRRN…LLIC) and 1761–1907 (NMPM…DRDC). Residues 1578 to 1907 (NRRNYYIAAE…TPFLIMDRDC (330 aa)) form the F5/8 type A 3 domain. Tyr-1593 carries the post-translational modification Sulfotyrosine. N-linked (GlcNAc...) asparagine glycosylation occurs at Asn-1703. Residues Cys-1725 and Cys-1751 are joined by a disulfide bond. Positions 1843 and 1845 each coordinate Cu cation. 2 disulfide bridges follow: Cys-1907-Cys-2061 and Cys-2066-Cys-2221. F5/8 type C domains are found at residues 1907-2061 (CRMP…LQGC) and 2066-2221 (CSTP…LFGC). 2 N-linked (GlcNAc...) asparagine glycosylation sites follow: Asn-2010 and Asn-2209.

This sequence belongs to the multicopper oxidase family. Factor Va, the activated form of factor V, is composed of a heavy chain and a light chain, non-covalently bound. The interaction between the two chains is calcium-dependent. Forms heterodimer with SERPINA5. Post-translationally, thrombin activates factor V proteolytically to the active cofactor, factor Va (formation of a heavy chain at the N-terminus and a light chain at the C-terminus). In terms of processing, sulfation is required for efficient thrombin cleavage and activation and for full procoagulant activity. Activated protein C inactivates factor V and factor Va by proteolytic degradation. Post-translationally, phosphorylated by FAM20C in the extracellular medium. In terms of tissue distribution, plasma.

The protein resides in the secreted. Inhibited by SERPINA5. Its function is as follows. Central regulator of hemostasis. It serves as a critical cofactor for the prothrombinase activity of factor Xa that results in the activation of prothrombin to thrombin. This is Coagulation factor V (F5) from Homo sapiens (Human).